We begin with the raw amino-acid sequence, 344 residues long: Pre-mRNA-splicing factor cwc-21 (344 aa).

The segment covering 1-19 (MSDNVGLSTPRGSGTSGYV) has biased composition (polar residues). 2 disordered regions span residues 1–58 (MSDN…LEHD) and 98–344 (EMER…DNRD). Basic and acidic residues predominate over residues 38–58 (KDFDSLKHQPRQPDKGLLEHD). The 44-residue stretch at 55–98 (LEHDRKREVEVKVFELRDKLEEEGVEEDEIETRCDELRRKLLAE) folds into the CWF21 domain. Positions 69 to 105 (ELRDKLEEEGVEEDEIETRCDELRRKLLAEMERNQNS) form a coiled coil. Basic and acidic residues-rich tracts occupy residues 120 to 167 (QVHE…REAN), 188 to 226 (RGGD…DRPP), and 238 to 277 (GGRD…DTGR). A compositionally biased stretch (basic residues) spans 288–306 (SRSRSRSRSYSRSRSPPRR). Basic and acidic residues-rich tracts occupy residues 307-316 (RAADSQDRSL) and 327-344 (SPDR…DNRD).

The protein belongs to the CWC21 family. As to quaternary structure, associates with the NTC complex (or PRP19-associated complex). The NTC complex associates with the spliceosome after the release of the U1 and U4 snRNAs and forms the CWC spliceosome subcomplex reminiscent of a late-stage spliceosome.

The protein localises to the cytoplasm. It is found in the nucleus. Functionally, involved in pre-mRNA splicing. May function at or prior to the first catalytic step of splicing at the catalytic center of the spliceosome. May do so by stabilizing the catalytic center or the position of the RNA substrate. The sequence is that of Pre-mRNA-splicing factor cwc-21 (cwc-21) from Neurospora crassa (strain ATCC 24698 / 74-OR23-1A / CBS 708.71 / DSM 1257 / FGSC 987).